A 304-amino-acid polypeptide reads, in one-letter code: Taste receptor type 2 member 4 (304 aa).

Residues 1–10 (MLWELYAFVF) are Extracellular-facing. Residues 11-31 (AASVVFNFVGIVANLFIIVII) form a helical membrane-spanning segment. The Cytoplasmic portion of the chain corresponds to 32–46 (SKTWVKSHKISSSDK). Residues 47–67 (ILFSLAITRFLTLGLFLLNTV) form a helical membrane-spanning segment. Residues 68-80 (YIATNTGRSVYFS) lie on the Extracellular side of the membrane. A helical transmembrane segment spans residues 81–101 (TFFLLCWKFLDSNSLWLVTFL). Topologically, residues 102–128 (NCLYCVKITHFQHPVFLLLKRTVSMKT) are cytoplasmic. Residues 129–149 (TSLLLACLLISAFTTLLYFVL) traverse the membrane as a helical segment. The Extracellular portion of the chain corresponds to 150–171 (TQISRFPEHIIGRNDTLFDVSD). A glycan (N-linked (GlcNAc...) asparagine) is linked at asparagine 163. A helical transmembrane segment spans residues 172–192 (GILTLAASLILSSLLQFLLNV). The Cytoplasmic portion of the chain corresponds to 193 to 229 (TFASLLIHSLRRHVQKMQRNRSSFWNPQTEAHVGAMR). Residues 230 to 250 (LMICFLVLYIPYSIAALLYFP) form a helical membrane-spanning segment. Residues 251 to 260 (SYMRKNLRAQ) lie on the Extracellular side of the membrane. The helical transmembrane segment at 261–281 (AACMIITAAYPPGHSILLIIT) threads the bilayer. The Cytoplasmic portion of the chain corresponds to 282-304 (HHKLKAKAKKICCFYKLRDFVSN).

It belongs to the G-protein coupled receptor T2R family. In terms of tissue distribution, expressed in tongue, stomach and duodenum.

It localises to the membrane. Its subcellular location is the cell projection. It is found in the cilium membrane. Its function is as follows. Gustducin-coupled receptor implicated in the perception of bitter compounds in the oral cavity and the gastrointestinal tract. Signals through PLCB2 and the calcium-regulated cation channel TRPM5. In airway epithelial cells, binding of denatonium increases the intracellular calcium ion concentration and stimulates ciliary beat frequency. This Rattus norvegicus (Rat) protein is Taste receptor type 2 member 4.